The sequence spans 104 residues: L-rhamnose mutarotase (104 aa).

A substrate-binding site is contributed by Y18. The Proton donor role is filled by H22. Substrate-binding positions include Y41 and 76–77 (WW).

This sequence belongs to the rhamnose mutarotase family. As to quaternary structure, homodimer.

The protein localises to the cytoplasm. It catalyses the reaction alpha-L-rhamnose = beta-L-rhamnose. Its pathway is carbohydrate metabolism; L-rhamnose metabolism. Involved in the anomeric conversion of L-rhamnose. The chain is L-rhamnose mutarotase from Yersinia pseudotuberculosis serotype O:1b (strain IP 31758).